The chain runs to 70 residues: Putative membrane protein insertion efficiency factor (70 aa).

This sequence belongs to the UPF0161 family.

The protein localises to the cell membrane. In terms of biological role, could be involved in insertion of integral membrane proteins into the membrane. The sequence is that of Putative membrane protein insertion efficiency factor from Moorella thermoacetica (strain ATCC 39073 / JCM 9320).